The following is a 227-amino-acid chain: LysM and putative peptidoglycan-binding domain-containing protein 1 (227 aa).

Ser23 and Ser33 each carry phosphoserine. The 45-residue stretch at 40-84 (LEHQLEPGDTLAGLALKYGVTMEQIKRTNRLYTNDSIFLKKTLYI) folds into the LysM domain. A disordered region spans residues 95–157 (NGLDSEEEEN…PSHDLSASDF (63 aa)). Over residues 98-108 (DSEEEENDGEE) the composition is skewed to acidic residues. Ser99 carries the post-translational modification Phosphoserine. Positions 143 to 152 (QGTSTPSHDL) are enriched in polar residues. A phosphoserine mark is found at Ser166, Ser181, Ser194, and Ser212. The disordered stretch occupies residues 169–227 (KKAAAQKLRKGESGVPEEDTGLYPSSPRMQQRAVLGPVPLTRTSRTQTLRDQEDEIFKL). Positions 216 to 227 (TLRDQEDEIFKL) are enriched in basic and acidic residues.

The chain is LysM and putative peptidoglycan-binding domain-containing protein 1 (Lysmd1) from Rattus norvegicus (Rat).